Reading from the N-terminus, the 469-residue chain is NADH-quinone oxidoreductase subunit N (469 aa).

The next 14 membrane-spanning stretches (helical) occupy residues 9-29, 40-60, 76-96, 105-125, 128-148, 162-182, 201-221, 234-254, 265-285, 294-316, 327-347, 365-385, 402-422, and 448-468; these read PLLMASEMMMFGAGLVALIAG, VGVMAAAAQVGVIGVAVVQMV, ATGVARIACAAGLLLIWAVAG, EAETYALLMFSATGVLVLAGA, LLLLVAGYFLASIPLYGLVGL, YLMGALFGILLMLGVTILYGL, VAVAAGVVGVLAGLMFEAGGV, ANATAATFLTTVPKIGALVAL, LAWPVLIAVFAVISMTLGNLA, RLLGWSTVSQVGYLLVPITVAGA, YLGGYTVTNIAAFAVTAALPG, AAALVVALLGLVGTPPTAVFI, LAVVVFVNTLVSLFYYLRWII, and VLAAALSLLLGIIAGPVWQLV.

The protein belongs to the complex I subunit 2 family. NDH-1 is composed of 14 different subunits. Subunits NuoA, H, J, K, L, M, N constitute the membrane sector of the complex.

It is found in the cell membrane. It carries out the reaction a quinone + NADH + 5 H(+)(in) = a quinol + NAD(+) + 4 H(+)(out). Its function is as follows. NDH-1 shuttles electrons from NADH, via FMN and iron-sulfur (Fe-S) centers, to quinones in the respiratory chain. The immediate electron acceptor for the enzyme in this species is believed to be a menaquinone. Couples the redox reaction to proton translocation (for every two electrons transferred, four hydrogen ions are translocated across the cytoplasmic membrane), and thus conserves the redox energy in a proton gradient. This is NADH-quinone oxidoreductase subunit N from Mycobacterium sp. (strain JLS).